Consider the following 536-residue polypeptide: uncharacterized protein (536 aa).

At 1-8 (MVSIKRYE) the chain is on the cytoplasmic side. Residues 9–29 (IISFVIAAFFFLSGLSMWIAF) traverse the membrane as a helical segment. Topologically, residues 30 to 502 (WPIFNSELRS…VWLGVIIVPR (473 aa)) are extracellular. 4 N-linked (GlcNAc...) asparagine glycosylation sites follow: Asn73, Asn236, Asn363, and Asn376. The chain crosses the membrane as a helical span at residues 503 to 523 (IIEYLKFVLIFISICILTTLL). Residues 524–536 (VIRVRVKGTVSVV) lie on the Cytoplasmic side of the membrane.

Belongs to the CD36 family.

It is found in the membrane. This is an uncharacterized protein from Caenorhabditis elegans.